The following is a 292-amino-acid chain: 4-hydroxy-tetrahydrodipicolinate synthase (292 aa).

Residue Thr45 coordinates pyruvate. Tyr133 serves as the catalytic Proton donor/acceptor. Lys162 functions as the Schiff-base intermediate with substrate in the catalytic mechanism. Ile204 provides a ligand contact to pyruvate.

Belongs to the DapA family. Homotetramer; dimer of dimers.

It is found in the cytoplasm. It carries out the reaction L-aspartate 4-semialdehyde + pyruvate = (2S,4S)-4-hydroxy-2,3,4,5-tetrahydrodipicolinate + H2O + H(+). It participates in amino-acid biosynthesis; L-lysine biosynthesis via DAP pathway; (S)-tetrahydrodipicolinate from L-aspartate: step 3/4. Its function is as follows. Catalyzes the condensation of (S)-aspartate-beta-semialdehyde [(S)-ASA] and pyruvate to 4-hydroxy-tetrahydrodipicolinate (HTPA). In Nitratidesulfovibrio vulgaris (strain ATCC 29579 / DSM 644 / CCUG 34227 / NCIMB 8303 / VKM B-1760 / Hildenborough) (Desulfovibrio vulgaris), this protein is 4-hydroxy-tetrahydrodipicolinate synthase.